The following is a 156-amino-acid chain: Small ribosomal subunit protein uS7 (156 aa).

It belongs to the universal ribosomal protein uS7 family. As to quaternary structure, part of the 30S ribosomal subunit. Contacts proteins S9 and S11.

Its function is as follows. One of the primary rRNA binding proteins, it binds directly to 16S rRNA where it nucleates assembly of the head domain of the 30S subunit. Is located at the subunit interface close to the decoding center, probably blocks exit of the E-site tRNA. The protein is Small ribosomal subunit protein uS7 of Mesomycoplasma hyopneumoniae (strain 232) (Mycoplasma hyopneumoniae).